The sequence spans 198 residues: Recombination protein RecR (198 aa).

The segment at 57-72 (CSVCGHITDTDPCYIC) adopts a C4-type zinc-finger fold. In terms of domain architecture, Toprim spans 80 to 175 (SMICVVEETK…KVTRLAHGLP (96 aa)).

This sequence belongs to the RecR family.

May play a role in DNA repair. It seems to be involved in an RecBC-independent recombinational process of DNA repair. It may act with RecF and RecO. This is Recombination protein RecR from Macrococcus caseolyticus (strain JCSC5402) (Macrococcoides caseolyticum).